A 143-amino-acid chain; its full sequence is Sirohydrochlorin cobaltochelatase (143 aa).

His9 functions as the Proton acceptor in the catalytic mechanism. His9 lines the Co(2+) pocket. A Ni(2+)-binding site is contributed by His9. Residues Glu45 and 70–75 contribute to the substrate site; that span reads LAHGNH. Residue His75 participates in Co(2+) binding. His75 is a binding site for Ni(2+).

Belongs to the CbiX family. CbiXS subfamily. Homotetramer; dimer of dimers.

The enzyme catalyses Co-sirohydrochlorin + 2 H(+) = sirohydrochlorin + Co(2+). The catalysed reaction is Ni-sirohydrochlorin + 2 H(+) = sirohydrochlorin + Ni(2+). It functions in the pathway cofactor biosynthesis; adenosylcobalamin biosynthesis; cob(II)yrinate a,c-diamide from sirohydrochlorin (anaerobic route): step 1/10. Functionally, catalyzes the insertion of Co(2+) into sirohydrochlorin as part of the anaerobic pathway to cobalamin biosynthesis. Involved in the biosynthesis of the unique nickel-containing tetrapyrrole coenzyme F430, the prosthetic group of methyl-coenzyme M reductase (MCR), which plays a key role in methanogenesis and anaerobic methane oxidation. Catalyzes the insertion of Ni(2+) into sirohydrochlorin to yield Ni-sirohydrochlorin. This chain is Sirohydrochlorin cobaltochelatase, found in Methanococcus aeolicus (strain ATCC BAA-1280 / DSM 17508 / OCM 812 / Nankai-3).